A 400-amino-acid polypeptide reads, in one-letter code: Na(+)/H(+) antiporter NhaA (400 aa).

Transmembrane regions (helical) follow at residues 26–46 (AGGI…NSPL), 71–91 (LIHW…GMEV), 107–127 (IFPA…YWFI), 137–157 (GWAI…ALLS), 166–186 (IFLL…IALF), 189–209 (HGLS…LILL), 212–232 (FKVS…ASVL), 233–253 (KSGV…PLKG), 273–293 (FVIL…GIDV), 299–319 (PLLL…IFGF), 340–360 (IFAV…LASL), and 373–393 (LSRL…YLFL).

It belongs to the NhaA Na(+)/H(+) (TC 2.A.33) antiporter family.

Its subcellular location is the cell inner membrane. It catalyses the reaction Na(+)(in) + 2 H(+)(out) = Na(+)(out) + 2 H(+)(in). Functionally, na(+)/H(+) antiporter that extrudes sodium in exchange for external protons. The polypeptide is Na(+)/H(+) antiporter NhaA (Haemophilus influenzae (strain PittEE)).